Here is a 129-residue protein sequence, read N- to C-terminus: Large ribosomal subunit protein bL21 (129 aa).

This sequence belongs to the bacterial ribosomal protein bL21 family. Part of the 50S ribosomal subunit. Contacts protein L20.

In terms of biological role, this protein binds to 23S rRNA in the presence of protein L20. In Microcystis aeruginosa (strain NIES-843 / IAM M-2473), this protein is Large ribosomal subunit protein bL21.